Reading from the N-terminus, the 708-residue chain is Ribosomal RNA large subunit methyltransferase K/L (708 aa).

In terms of domain architecture, THUMP spans 43–154 (QGYQITLWTR…RGKITIGINF (112 aa)).

This sequence belongs to the methyltransferase superfamily. RlmKL family.

The protein resides in the cytoplasm. The catalysed reaction is guanosine(2445) in 23S rRNA + S-adenosyl-L-methionine = N(2)-methylguanosine(2445) in 23S rRNA + S-adenosyl-L-homocysteine + H(+). It catalyses the reaction guanosine(2069) in 23S rRNA + S-adenosyl-L-methionine = N(2)-methylguanosine(2069) in 23S rRNA + S-adenosyl-L-homocysteine + H(+). Functionally, specifically methylates the guanine in position 2445 (m2G2445) and the guanine in position 2069 (m7G2069) of 23S rRNA. The protein is Ribosomal RNA large subunit methyltransferase K/L of Shewanella amazonensis (strain ATCC BAA-1098 / SB2B).